Consider the following 130-residue polypeptide: Small ribosomal subunit protein uS9 (130 aa).

Belongs to the universal ribosomal protein uS9 family.

The polypeptide is Small ribosomal subunit protein uS9 (Bacillus thuringiensis subsp. konkukian (strain 97-27)).